Here is a 438-residue protein sequence, read N- to C-terminus: MTETTEAKVDAAQTAALELANESDEARQENLQAIADAIDERRAEVLEANEKDVEAAEEMLEAGEYSQALVDRLKLSDAKLDSIIEMVRSVAGQEDPLGKTLTARELDDGLDLYKVSVPIGVIGTVFESRPDALVQIAALSLRSGNAVILKGGSEASHSNRVLYEIIREATADLPDGWAQLIEAREDVDRLLGMDDSVDLLMPRGSSAFVSYIQDNTSIPVLGHTEGVCHVYVDDAADLDMATDIAYDAKVQYPAVCNAVETLLVHEDVAEEYLPDIAARYAEADVEMRGDEATRSVLDRDIEAATDDDWTSEYGDLIVAIKVVDSLESAIDHINTNGSKHTESIVTEDDGRASTFMRRLDSASVFHNASTRFSDGYRFGLGAEVGISTGKIHARGPVGLKGLTTYKYHLEGDGHLVATYAGEDAKPFSHEEFDGEWSP.

Belongs to the gamma-glutamyl phosphate reductase family.

Its subcellular location is the cytoplasm. The enzyme catalyses L-glutamate 5-semialdehyde + phosphate + NADP(+) = L-glutamyl 5-phosphate + NADPH + H(+). It functions in the pathway amino-acid biosynthesis; L-proline biosynthesis; L-glutamate 5-semialdehyde from L-glutamate: step 2/2. Catalyzes the NADPH-dependent reduction of L-glutamate 5-phosphate into L-glutamate 5-semialdehyde and phosphate. The product spontaneously undergoes cyclization to form 1-pyrroline-5-carboxylate. This Natronomonas pharaonis (strain ATCC 35678 / DSM 2160 / CIP 103997 / JCM 8858 / NBRC 14720 / NCIMB 2260 / Gabara) (Halobacterium pharaonis) protein is Gamma-glutamyl phosphate reductase.